The chain runs to 916 residues: Isoleucine--tRNA ligase (916 aa).

The short motif at 57–67 (PYANGNLHMGH) is the 'HIGH' region element. L-isoleucyl-5'-AMP is bound at residue glutamate 554. Positions 595-599 (KMSKS) match the 'KMSKS' region motif. Residue lysine 598 coordinates ATP. Zn(2+)-binding residues include cysteine 885, cysteine 888, cysteine 905, and cysteine 908.

The protein belongs to the class-I aminoacyl-tRNA synthetase family. IleS type 1 subfamily. Monomer. Requires Zn(2+) as cofactor.

Its subcellular location is the cytoplasm. It catalyses the reaction tRNA(Ile) + L-isoleucine + ATP = L-isoleucyl-tRNA(Ile) + AMP + diphosphate. In terms of biological role, catalyzes the attachment of isoleucine to tRNA(Ile). As IleRS can inadvertently accommodate and process structurally similar amino acids such as valine, to avoid such errors it has two additional distinct tRNA(Ile)-dependent editing activities. One activity is designated as 'pretransfer' editing and involves the hydrolysis of activated Val-AMP. The other activity is designated 'posttransfer' editing and involves deacylation of mischarged Val-tRNA(Ile). The polypeptide is Isoleucine--tRNA ligase (Staphylococcus haemolyticus (strain JCSC1435)).